Reading from the N-terminus, the 513-residue chain is Putative ATP-dependent RNA helicase QP509L (513 aa).

In terms of domain architecture, Helicase ATP-binding spans 110 to 262 (KKLLSPYGRF…KIIIHHLGQP (153 aa)). Residue 123–130 (LNTGLGKT) participates in ATP binding. A DEAH box motif is present at residues 215–218 (DEAH).

It belongs to the DEAD box helicase family. DEAH subfamily.

The catalysed reaction is ATP + H2O = ADP + phosphate + H(+). The protein is Putative ATP-dependent RNA helicase QP509L of African swine fever virus (isolate Tick/South Africa/Pretoriuskop Pr4/1996) (ASFV).